Here is a 427-residue protein sequence, read N- to C-terminus: Inward rectifier potassium channel 2 (427 aa).

The Cytoplasmic segment spans residues 1-81 (MGSVRTNRYS…IFTTCVDIRW (81 aa)). Cys-76 is modified (S-nitrosocysteine). The chain crosses the membrane as a helical span at residues 82-106 (RWMLVIFCLAFVLSWLFFGCVFWLI). The Extracellular segment spans residues 107–128 (ALLHGDLDASKESKACVSEVNS). Residues 129–140 (FTAAFLFSIETQ) constitute an intramembrane region (helical; Pore-forming). The segment at residues 141–147 (TTIGYGF) is an intramembrane region (pore-forming). The short motif at 142–147 (TIGYGF) is the Selectivity filter element. At 148-156 (RCVTDECPI) the chain is on the extracellular side. Residues 157-178 (AVFMVVFQSIVGCIIDAFIIGA) form a helical membrane-spanning segment. Over 179 to 427 (VMAKMAKPKK…PRPLRRESEI (249 aa)) the chain is Cytoplasmic. Residues 181 to 208 (AKMAKPKKRNETLVFSHNAVIAMRDGKL) are polyphosphoinositide (PIP2)-binding. The segment at 383-427 (TSKEEEDSENGVPESTSTDSPPGIDLHNQASVPLEPRPLRRESEI) is disordered. The PDZ-binding motif lies at 425–427 (SEI).

This sequence belongs to the inward rectifier-type potassium channel (TC 1.A.2.1) family. KCNJ2 subfamily. Homotetramer. Homomultimeric and heteromultimeric association with KCNJ4/Kir2.3. Can form heteromeric channels with Kir2.6/KCNJ18. Associates, via its PDZ-recognition domain, with a complex containing LIN7A, LIN7B, LIN7C, DLG1, CASK and APBA1. In terms of processing, S-nitrosylation increases the open probability and inward rectifying currents. Prominently expressed in the central nervous system. Also found in other excitable tissues such as heart and skeletal muscle.

The protein localises to the cell membrane. It localises to the sarcolemma. Its subcellular location is the T-tubule. The enzyme catalyses K(+)(in) = K(+)(out). Activated by phosphatidylinositol 4,5 biphosphate (PtdIns(4,5)P2). Inward rectifier potassium channels are characterized by a greater tendency to allow potassium to flow into the cell rather than out of it. Their voltage dependence is regulated by the concentration of extracellular potassium; as external potassium is raised, the voltage range of the channel opening shifts to more positive voltages. The inward rectification is mainly due to the blockage of outward current by internal magnesium. Can be blocked by extracellular barium and cesium. Probably participates in establishing action potential waveform and excitability of neuronal and muscle tissues. The polypeptide is Inward rectifier potassium channel 2 (Kcnj2) (Rattus norvegicus (Rat)).